We begin with the raw amino-acid sequence, 352 residues long: Chorismate synthase (352 aa).

An NADP(+)-binding site is contributed by Arg-48. FMN-binding positions include 125–127, 237–238, Gly-278, 293–297, and Arg-319; these read RSS, NA, and KPTSS.

This sequence belongs to the chorismate synthase family. Homotetramer. The cofactor is FMNH2.

It catalyses the reaction 5-O-(1-carboxyvinyl)-3-phosphoshikimate = chorismate + phosphate. Its pathway is metabolic intermediate biosynthesis; chorismate biosynthesis; chorismate from D-erythrose 4-phosphate and phosphoenolpyruvate: step 7/7. Catalyzes the anti-1,4-elimination of the C-3 phosphate and the C-6 proR hydrogen from 5-enolpyruvylshikimate-3-phosphate (EPSP) to yield chorismate, which is the branch point compound that serves as the starting substrate for the three terminal pathways of aromatic amino acid biosynthesis. This reaction introduces a second double bond into the aromatic ring system. This is Chorismate synthase from Francisella tularensis subsp. tularensis (strain FSC 198).